We begin with the raw amino-acid sequence, 616 residues long: Matrix metalloproteinase-21 (616 aa).

Positions 1–22 (MPTAPALGALLLLLGALTPGHQ) are cleaved as a signal peptide. The propeptide occupies 23–192 (EKLFHSRDHS…TSTSKIRKKR (170 aa)). A Cysteine switch motif is present at residues 139–146 (PRCGVPDN). Cysteine 141 lines the Zn(2+) pocket. Positions 157–186 (SNSNNVTEKASGKSLNTTTNQNPENGTSTS) are disordered. N-linked (GlcNAc...) asparagine glycosylation is found at asparagine 161, asparagine 172, and asparagine 181. Histidine 329 provides a ligand contact to Zn(2+). Glutamate 330 is a catalytic residue. Residues histidine 333 and histidine 339 each contribute to the Zn(2+) site. Cysteines 375 and 606 form a disulfide. Hemopexin repeat units follow at residues 376 to 435 (EGSF…WHGI), 437 to 493 (AEGI…FPKI), 494 to 542 (PSPI…FPAV), and 549 to 605 (FGNI…WTDI). Asparagine 418 is a glycosylation site (N-linked (GlcNAc...) asparagine). An N-linked (GlcNAc...) asparagine glycan is attached at asparagine 597.

This sequence belongs to the peptidase M10A family. Requires Zn(2+) as cofactor. The cofactor is Ca(2+). The precursor is cleaved by a furin endopeptidase.

The protein localises to the secreted. Its function is as follows. May play a role in gastrulation-related cell movement. Plays a specialized role in the generation of left-right asymmetry during embryogenesis. May act as a negative regulator of the NOTCH-signaling pathway. The sequence is that of Matrix metalloproteinase-21 (MMP21) from Cynops pyrrhogaster (Japanese fire-bellied newt).